A 140-amino-acid polypeptide reads, in one-letter code: Anti-sigma F factor (140 aa).

Belongs to the anti-sigma-factor family.

It carries out the reaction L-seryl-[protein] + ATP = O-phospho-L-seryl-[protein] + ADP + H(+). It catalyses the reaction L-threonyl-[protein] + ATP = O-phospho-L-threonyl-[protein] + ADP + H(+). Functionally, binds to sigma F and blocks its ability to form an RNA polymerase holoenzyme (E-sigma F). Phosphorylates SpoIIAA on a serine residue. This phosphorylation may enable SpoIIAA to act as an anti-anti-sigma factor that counteracts SpoIIAB and thus releases sigma F from inhibition. In Clostridium perfringens (strain ATCC 13124 / DSM 756 / JCM 1290 / NCIMB 6125 / NCTC 8237 / Type A), this protein is Anti-sigma F factor.